The following is a 358-amino-acid chain: Chorismate synthase (358 aa).

A disordered region spans residues alanine 39–glutamate 61. NADP(+)-binding residues include arginine 48 and arginine 54. FMN-binding positions include arginine 125–serine 127, asparagine 237–alanine 238, glycine 284, lysine 299–serine 303, and arginine 325.

This sequence belongs to the chorismate synthase family. Homotetramer. The cofactor is FMNH2.

It catalyses the reaction 5-O-(1-carboxyvinyl)-3-phosphoshikimate = chorismate + phosphate. The protein operates within metabolic intermediate biosynthesis; chorismate biosynthesis; chorismate from D-erythrose 4-phosphate and phosphoenolpyruvate: step 7/7. Functionally, catalyzes the anti-1,4-elimination of the C-3 phosphate and the C-6 proR hydrogen from 5-enolpyruvylshikimate-3-phosphate (EPSP) to yield chorismate, which is the branch point compound that serves as the starting substrate for the three terminal pathways of aromatic amino acid biosynthesis. This reaction introduces a second double bond into the aromatic ring system. This chain is Chorismate synthase, found in Sphingopyxis alaskensis (strain DSM 13593 / LMG 18877 / RB2256) (Sphingomonas alaskensis).